The following is a 255-amino-acid chain: 1-(5-phosphoribosyl)-5-[(5-phosphoribosylamino)methylideneamino] imidazole-4-carboxamide isomerase (255 aa).

Catalysis depends on Asp-8, which acts as the Proton acceptor. Asp-129 acts as the Proton donor in catalysis.

It belongs to the HisA/HisF family.

It is found in the cytoplasm. It carries out the reaction 1-(5-phospho-beta-D-ribosyl)-5-[(5-phospho-beta-D-ribosylamino)methylideneamino]imidazole-4-carboxamide = 5-[(5-phospho-1-deoxy-D-ribulos-1-ylimino)methylamino]-1-(5-phospho-beta-D-ribosyl)imidazole-4-carboxamide. It participates in amino-acid biosynthesis; L-histidine biosynthesis; L-histidine from 5-phospho-alpha-D-ribose 1-diphosphate: step 4/9. This chain is 1-(5-phosphoribosyl)-5-[(5-phosphoribosylamino)methylideneamino] imidazole-4-carboxamide isomerase, found in Synechococcus sp. (strain CC9605).